We begin with the raw amino-acid sequence, 402 residues long: TBC1 domain family member 20 (402 aa).

Residues methionine 1–lysine 27 are disordered. Residues arginine 14–alanine 26 are compositionally biased toward basic and acidic residues. The Rab-GAP TBC domain occupies leucine 59–histidine 245. 2 consecutive transmembrane segments (helical) span residues leucine 237–valine 257 and phenylalanine 366–valine 386.

Its subcellular location is the membrane. GTPase-activating protein specific for Rab1 and Rab2 small GTPase families for which it can accelerate the intrinsic GTP hydrolysis rate by more than five orders of magnitude. Also shows GAP activity for RAB18 GTPase. Promotes RAB18 dissociation from the endoplasmic reticulum (ER) membrane into the cytosol, probably through stimulating RAB18 GTP-hydrolysis. Involved in maintaining endoplasmic reticulum structure. In Mus musculus (Mouse), this protein is TBC1 domain family member 20.